Here is a 139-residue protein sequence, read N- to C-terminus: MALIGPKTTIAAVFIGPFLVACMLGIGLVYLLQLQVQIFHVKDTIRVTGKPATVSYTTSTPVTPVATTLDGTTYTLIRPTSSYTRVYLGSSRGFDTSTFGPKTLDYITSSKPHLNSGRPYTLRHLPKYMTPPATWRFGL.

Residues 12 to 32 traverse the membrane as a helical segment; that stretch reads AVFIGPFLVACMLGIGLVYLL.

This sequence belongs to the coronaviruses ns4/ns4.8 protein family.

It is found in the host membrane. The protein is Non-structural protein 4 of Murine coronavirus (strain JHM) (MHV-JHM).